Here is a 276-residue protein sequence, read N- to C-terminus: Small ribosomal subunit protein uS3 (276 aa).

A KH type-2 domain is found at 39–110 (IRRETMKFLK…KINIKIKEIK (72 aa)).

This sequence belongs to the universal ribosomal protein uS3 family. Part of the 30S ribosomal subunit. Forms a tight complex with proteins S10 and S14.

In terms of biological role, binds the lower part of the 30S subunit head. Binds mRNA in the 70S ribosome, positioning it for translation. The protein is Small ribosomal subunit protein uS3 of Borrelia turicatae (strain 91E135).